The following is a 53-amino-acid chain: uncharacterized protein (53 aa).

A helical transmembrane segment spans residues C26–F46.

The protein belongs to the plectrovirus ORF11 family.

The protein localises to the host membrane. This is an uncharacterized protein from Spiroplasma virus SpV1-R8A2 B (SpV1).